The sequence spans 474 residues: Glutamate--tRNA ligase (474 aa).

Positions 10-20 (PSPTGYLHIGG) match the 'HIGH' region motif. Zn(2+) contacts are provided by Cys107, Cys109, Cys134, and Asp136. The 'KMSKS' region motif lies at 244 to 248 (RLSKR). Lys247 serves as a coordination point for ATP.

It belongs to the class-I aminoacyl-tRNA synthetase family. Glutamate--tRNA ligase type 1 subfamily. As to quaternary structure, monomer. Zn(2+) is required as a cofactor.

Its subcellular location is the cytoplasm. The catalysed reaction is tRNA(Glu) + L-glutamate + ATP = L-glutamyl-tRNA(Glu) + AMP + diphosphate. Functionally, catalyzes the attachment of glutamate to tRNA(Glu) in a two-step reaction: glutamate is first activated by ATP to form Glu-AMP and then transferred to the acceptor end of tRNA(Glu). The protein is Glutamate--tRNA ligase of Anaeromyxobacter dehalogenans (strain 2CP-C).